We begin with the raw amino-acid sequence, 155 residues long: Anaerobic ribonucleoside-triphosphate reductase-activating protein (155 aa).

Cys-26, Cys-30, and Cys-33 together coordinate [4Fe-4S] cluster. Residues 32–34 and Gly-74 each bind S-adenosyl-L-methionine; that span reads GCY.

This sequence belongs to the organic radical-activating enzymes family. As to quaternary structure, forms a tetramer composed of two NrdD and two NrdG subunits. [4Fe-4S] cluster is required as a cofactor.

The protein localises to the cytoplasm. The catalysed reaction is glycyl-[protein] + reduced [flavodoxin] + S-adenosyl-L-methionine = glycin-2-yl radical-[protein] + semiquinone [flavodoxin] + 5'-deoxyadenosine + L-methionine + H(+). Activation of anaerobic ribonucleoside-triphosphate reductase under anaerobic conditions by generation of an organic free radical, using S-adenosylmethionine and reduced flavodoxin as cosubstrates to produce 5'-deoxy-adenosine. This chain is Anaerobic ribonucleoside-triphosphate reductase-activating protein (nrdG), found in Vibrio cholerae serotype O1 (strain ATCC 39315 / El Tor Inaba N16961).